The following is a 239-amino-acid chain: tRNA (guanine-N(1)-)-methyltransferase (239 aa).

Residues G108 and L127–L132 each bind S-adenosyl-L-methionine.

This sequence belongs to the RNA methyltransferase TrmD family. As to quaternary structure, homodimer.

Its subcellular location is the cytoplasm. It catalyses the reaction guanosine(37) in tRNA + S-adenosyl-L-methionine = N(1)-methylguanosine(37) in tRNA + S-adenosyl-L-homocysteine + H(+). Its function is as follows. Specifically methylates guanosine-37 in various tRNAs. The polypeptide is tRNA (guanine-N(1)-)-methyltransferase (Streptococcus pneumoniae (strain P1031)).